Here is a 175-residue protein sequence, read N- to C-terminus: Epididymal-specific lipocalin-8 (175 aa).

A signal peptide spans 1–25 (MPGAAEALPTVTVTLVAGAVPPASG). Asn66 and Asn74 each carry an N-linked (GlcNAc...) asparagine glycan. An intrachain disulfide couples Cys79 to Cys166.

This sequence belongs to the calycin superfamily. Lipocalin family.

It localises to the secreted. Its function is as follows. May play a role in male fertility. May act as a retinoid carrier protein within the epididymis. The sequence is that of Epididymal-specific lipocalin-8 (LCN8) from Homo sapiens (Human).